A 972-amino-acid chain; its full sequence is C-1-tetrahydrofolate synthase, mitochondrial (972 aa).

Residues M1–E55 constitute a mitochondrion transit peptide. The methylenetetrahydrofolate dehydrogenase and cyclohydrolase stretch occupies residues V56 to P340. Residues Y84–K88 and V131–L133 contribute to the substrate site. Residues G202–S204 and S227 each bind NADP(+). P299–G303 is a binding site for substrate. Residues V341–S972 are formyltetrahydrofolate synthetase. Residue T405 to S412 coordinates ATP.

In the N-terminal section; belongs to the tetrahydrofolate dehydrogenase/cyclohydrolase family. The protein in the C-terminal section; belongs to the formate--tetrahydrofolate ligase family. In terms of assembly, homodimer.

It is found in the mitochondrion. It carries out the reaction (6R)-5,10-methylene-5,6,7,8-tetrahydrofolate + NADP(+) = (6R)-5,10-methenyltetrahydrofolate + NADPH. The enzyme catalyses (6R)-5,10-methenyltetrahydrofolate + H2O = (6R)-10-formyltetrahydrofolate + H(+). It catalyses the reaction (6S)-5,6,7,8-tetrahydrofolate + formate + ATP = (6R)-10-formyltetrahydrofolate + ADP + phosphate. The protein operates within one-carbon metabolism; tetrahydrofolate interconversion. Functionally, mitochondrial isozyme of C-1-tetrahydrofolate synthase. The trifunctional enzyme catalyzes the interconversion of the one-carbon derivatives of tetrahydrofolate (THF) between different oxidation states by the enzymatic activities 10-formyltetrahydrofolate synthetase, 5,lO-methenyltetrahydrofolate cyclohydrolase, and 5,lO-methylenetetrahydrofolate dehydrogenase. The sequence is that of C-1-tetrahydrofolate synthase, mitochondrial (ade9) from Schizosaccharomyces pombe (strain 972 / ATCC 24843) (Fission yeast).